A 625-amino-acid chain; its full sequence is tRNA uridine 5-carboxymethylaminomethyl modification enzyme MnmG (625 aa).

An FAD-binding site is contributed by 13–18 (GGGHAG). Residue 273–287 (GPRYCPSIEDKVVRF) participates in NAD(+) binding.

This sequence belongs to the MnmG family. Homodimer. Heterotetramer of two MnmE and two MnmG subunits. FAD is required as a cofactor.

It localises to the cytoplasm. In terms of biological role, NAD-binding protein involved in the addition of a carboxymethylaminomethyl (cmnm) group at the wobble position (U34) of certain tRNAs, forming tRNA-cmnm(5)s(2)U34. This is tRNA uridine 5-carboxymethylaminomethyl modification enzyme MnmG from Methylococcus capsulatus (strain ATCC 33009 / NCIMB 11132 / Bath).